The primary structure comprises 432 residues: 3-oxo-tetronate kinase (432 aa).

Residues histidine 155, serine 272, alanine 324, glycine 344, glutamate 348, glycine 370–threonine 373, and glycine 414 contribute to the ATP site.

This sequence belongs to the four-carbon acid sugar kinase family.

The catalysed reaction is 3-dehydro-L-erythronate + ATP = 3-dehydro-4-O-phospho-L-erythronate + ADP + H(+). The enzyme catalyses 3-dehydro-D-erythronate + ATP = 3-dehydro-4-O-phospho-D-erythronate + ADP + H(+). Catalyzes the ATP-dependent phosphorylation of 3-oxo-tetronate to 3-oxo-tetronate 4-phosphate. The sequence is that of 3-oxo-tetronate kinase from Cupriavidus necator (strain ATCC 17699 / DSM 428 / KCTC 22496 / NCIMB 10442 / H16 / Stanier 337) (Ralstonia eutropha).